A 542-amino-acid polypeptide reads, in one-letter code: Calcium/calmodulin-dependent protein kinase type II subunit beta (542 aa).

A Protein kinase domain is found at 14–272 (YQLYEDIGKG…AHEALKHPWV (259 aa)). Tyr17 is modified (phosphotyrosine). Residues 20–28 (IGKGAFSVV) and Lys43 each bind ATP. Residue Asp136 is the Proton acceptor of the active site. The tract at residues 283–292 (HRQETVECLK) is autoinhibitory domain. Phosphothreonine; by autocatalysis is present on Thr287. Residues 291-301 (LKKFNARRKLK) form a calmodulin-binding region. Thr306 and Thr307 each carry phosphothreonine; by autocatalysis. Residues 349–376 (ADGVKPQTNSTKNSSAITSPKGSLPPAA) are disordered. Over residues 354 to 369 (PQTNSTKNSSAITSPK) the composition is skewed to polar residues. A phosphoserine mark is found at Ser367, Ser371, Ser394, and Ser397. Residues Thr400 and Thr401 each carry the phosphothreonine modification.

The protein belongs to the protein kinase superfamily. CAMK Ser/Thr protein kinase family. CaMK subfamily. As to quaternary structure, CAMK2 is composed of 4 different chains: alpha (CAMK2A), beta (CAMK2B), gamma (CAMK2G), and delta (CAMK2D). The different isoforms assemble into homo- or heteromultimeric holoenzymes composed of 12 subunits with two hexameric rings stacked one on top of the other. Interacts with SYNGAP1, CAMK2N2 and MPDZ. Interacts with FOXO3. Interacts (when in a kinase inactive state not associated with calmodulin) with ARC; leading to target ARC to inactive synapses. Interacts with CAMK2N1; this interaction requires CAMK2B activation by Ca(2+). In terms of processing, autophosphorylation of Thr-287 following activation by Ca(2+)/calmodulin. Phosphorylation of Thr-287 locks the kinase into an activated state.

It is found in the cytoplasm. It localises to the cytoskeleton. Its subcellular location is the microtubule organizing center. The protein resides in the centrosome. The protein localises to the sarcoplasmic reticulum membrane. It is found in the synapse. The enzyme catalyses L-seryl-[protein] + ATP = O-phospho-L-seryl-[protein] + ADP + H(+). It carries out the reaction L-threonyl-[protein] + ATP = O-phospho-L-threonyl-[protein] + ADP + H(+). Activated by Ca(2+)/calmodulin. Binding of calmodulin results in conformational change that relieves intrasteric autoinhibition and allows autophosphorylation of Thr-287 which turns the kinase in a constitutively active form and confers to the kinase a Ca(2+)-independent activity. In terms of biological role, calcium/calmodulin-dependent protein kinase that functions autonomously after Ca(2+)/calmodulin-binding and autophosphorylation, and is involved in dendritic spine and synapse formation, neuronal plasticity and regulation of sarcoplasmic reticulum Ca(2+) transport in skeletal muscle. In neurons, plays an essential structural role in the reorganization of the actin cytoskeleton during plasticity by binding and bundling actin filaments in a kinase-independent manner. This structural function is required for correct targeting of CaMK2A, which acts downstream of NMDAR to promote dendritic spine and synapse formation and maintain synaptic plasticity which enables long-term potentiation (LTP) and hippocampus-dependent learning. In developing hippocampal neurons, promotes arborization of the dendritic tree and in mature neurons, promotes dendritic remodeling. Also regulates the migration of developing neurons. Participates in the modulation of skeletal muscle function in response to exercise. In slow-twitch muscles, is involved in regulation of sarcoplasmic reticulum (SR) Ca(2+) transport and in fast-twitch muscle participates in the control of Ca(2+) release from the SR through phosphorylation of triadin, a ryanodine receptor-coupling factor, and phospholamban (PLN/PLB), an endogenous inhibitor of SERCA2A/ATP2A2. In response to interferon-gamma (IFN-gamma) stimulation, catalyzes phosphorylation of STAT1, stimulating the JAK-STAT signaling pathway. Phosphorylates reticulophagy regulator RETREG1 at 'Thr-134' under endoplasmic reticulum stress conditions which enhances RETREG1 oligomerization and its membrane scission and reticulophagy activity. This chain is Calcium/calmodulin-dependent protein kinase type II subunit beta (Camk2b), found in Mus musculus (Mouse).